Here is a 470-residue protein sequence, read N- to C-terminus: Argininosuccinate lyase (470 aa).

It belongs to the lyase 1 family. Argininosuccinate lyase subfamily.

It is found in the cytoplasm. It catalyses the reaction 2-(N(omega)-L-arginino)succinate = fumarate + L-arginine. It functions in the pathway amino-acid biosynthesis; L-arginine biosynthesis; L-arginine from L-ornithine and carbamoyl phosphate: step 3/3. The chain is Argininosuccinate lyase from Bordetella avium (strain 197N).